The chain runs to 266 residues: MNIFQTIVLALVQGLSEFLPISSSAHLILVPELTNWTDQSLAFDVVVHMGTLSAVIFYYQAMIKCLFFDFYHSIIKRQTIGESKLAWGVLLGTIPVGLVGMIFRDSIATDLRSVEIIAYATLVFGVLLGFASWFSHRNKNQKSTISWVDIGFIGMAQTLALIPGTSRSGITITACMLVGLSRKLSIQFAFLLSIPVISLSLILILIDLYHQAQLVNVSLLAMGFVVAAISAYVTIVFFIKLIDAVGMMPFVIYRLTLGIFLFFFIL.

The next 8 membrane-spanning stretches (helical) occupy residues 1–21 (MNIF…FLPI), 43–63 (FDVV…QAMI), 83–103 (SKLA…GMIF), 114–134 (VEII…ASWF), 144–164 (TISW…LIPG), 186–206 (IQFA…LILI), 219–239 (LLAM…VFFI), and 245–265 (VGMM…FFFI).

The protein belongs to the UppP family.

It localises to the cell inner membrane. The catalysed reaction is di-trans,octa-cis-undecaprenyl diphosphate + H2O = di-trans,octa-cis-undecaprenyl phosphate + phosphate + H(+). In terms of biological role, catalyzes the dephosphorylation of undecaprenyl diphosphate (UPP). Confers resistance to bacitracin. The polypeptide is Undecaprenyl-diphosphatase (Ruthia magnifica subsp. Calyptogena magnifica).